Consider the following 257-residue polypeptide: 1-(5-phosphoribosyl)-5-[(5-phosphoribosylamino)methylideneamino] imidazole-4-carboxamide isomerase (257 aa).

The active-site Proton acceptor is Asp-8. Residue Asp-129 is the Proton donor of the active site.

It belongs to the HisA/HisF family.

It is found in the cytoplasm. The enzyme catalyses 1-(5-phospho-beta-D-ribosyl)-5-[(5-phospho-beta-D-ribosylamino)methylideneamino]imidazole-4-carboxamide = 5-[(5-phospho-1-deoxy-D-ribulos-1-ylimino)methylamino]-1-(5-phospho-beta-D-ribosyl)imidazole-4-carboxamide. The protein operates within amino-acid biosynthesis; L-histidine biosynthesis; L-histidine from 5-phospho-alpha-D-ribose 1-diphosphate: step 4/9. In Nostoc punctiforme (strain ATCC 29133 / PCC 73102), this protein is 1-(5-phosphoribosyl)-5-[(5-phosphoribosylamino)methylideneamino] imidazole-4-carboxamide isomerase.